The chain runs to 511 residues: Phospho-2-dehydro-3-deoxyheptonate aldolase 1, chloroplastic (511 aa).

The transit peptide at 1 to 49 directs the protein to the chloroplast; it reads MALSNTLSLSSSKSLVQSHLLHNPTPQPRFSLFPTTQHGRRHPISAVHA.

This sequence belongs to the class-II DAHP synthase family. In terms of tissue distribution, higher levels seen in the cotyledons than in the leaves and flowers. Lower levels seen in the roots and stems.

It localises to the plastid. The protein resides in the chloroplast. The catalysed reaction is D-erythrose 4-phosphate + phosphoenolpyruvate + H2O = 7-phospho-2-dehydro-3-deoxy-D-arabino-heptonate + phosphate. It participates in metabolic intermediate biosynthesis; chorismate biosynthesis; chorismate from D-erythrose 4-phosphate and phosphoenolpyruvate: step 1/7. In terms of biological role, may be involved in the synthesis of secondary metabolites derived from intermediates of the pre-chorismate pathway up to shikimate. This is Phospho-2-dehydro-3-deoxyheptonate aldolase 1, chloroplastic from Solanum lycopersicum (Tomato).